The sequence spans 247 residues: Probable transcriptional regulatory protein YPK_2146 (247 aa).

This sequence belongs to the TACO1 family.

Its subcellular location is the cytoplasm. This chain is Probable transcriptional regulatory protein YPK_2146, found in Yersinia pseudotuberculosis serotype O:3 (strain YPIII).